A 1107-amino-acid polypeptide reads, in one-letter code: Enolase-phosphatase E1 (1107 aa).

Mg(2+) is bound by residues D19 and E21. Substrate-binding positions include 152-153 (SS) and K186. A Mg(2+)-binding site is contributed by D211. The tract at residues 258–1107 (SVKSTETENG…SATPSVETES (850 aa)) is disordered. Over residues 260–289 (KSTETENGAEKETVTESTEKVADESEKETE) the composition is skewed to basic and acidic residues. The span at 291 to 306 (ETAAAETENGAEAENG) shows a compositional bias: low complexity. Residues 366-376 (DAMDVDAEMTD) are compositionally biased toward acidic residues. Basic and acidic residues-rich tracts occupy residues 393–427 (VTEK…DTKQ) and 435–462 (GEDK…KEEE). Residues 475–485 (DKMDVDEEDSA) show a composition bias toward acidic residues. 6 stretches are compositionally biased toward basic and acidic residues: residues 486 to 512 (VIEK…KEEN), 534 to 548 (DETK…KEES), 572 to 586 (TVEK…SKSE), 593 to 604 (TSEKKVEDKSAN), 610 to 686 (KEPK…EVKA), and 693 to 776 (DESK…KSVD). The span at 794–803 (EETSATTEAQ) shows a compositional bias: low complexity. 2 stretches are compositionally biased toward basic and acidic residues: residues 804-838 (ATKE…DAKS) and 849-908 (KEMK…ETKG). Over residues 909 to 919 (VEATTAGPVEE) the composition is skewed to low complexity. Residues 920–935 (VAVEATEEDVAMEAES) show a composition bias toward acidic residues. 3 stretches are compositionally biased toward basic and acidic residues: residues 937-957 (DAVK…KLDS), 1001-1028 (DEVK…EADS), and 1035-1047 (NHDE…KEND). The segment covering 1048–1083 (TSASNIEEASSATTTTTNGTSTESDSSSTTPSSETV) has biased composition (low complexity).

This sequence belongs to the HAD-like hydrolase superfamily. MasA/MtnC family. Monomer. It depends on Mg(2+) as a cofactor.

It localises to the cytoplasm. The protein localises to the nucleus. It carries out the reaction 5-methylsulfanyl-2,3-dioxopentyl phosphate + H2O = 1,2-dihydroxy-5-(methylsulfanyl)pent-1-en-3-one + phosphate. The protein operates within amino-acid biosynthesis; L-methionine biosynthesis via salvage pathway; L-methionine from S-methyl-5-thio-alpha-D-ribose 1-phosphate: step 3/6. It participates in amino-acid biosynthesis; L-methionine biosynthesis via salvage pathway; L-methionine from S-methyl-5-thio-alpha-D-ribose 1-phosphate: step 4/6. In terms of biological role, bifunctional enzyme that catalyzes the enolization of 2,3-diketo-5-methylthiopentyl-1-phosphate (DK-MTP-1-P) into the intermediate 2-hydroxy-3-keto-5-methylthiopentenyl-1-phosphate (HK-MTPenyl-1-P), which is then dephosphorylated to form the acireductone 1,2-dihydroxy-3-keto-5-methylthiopentene (DHK-MTPene). This chain is Enolase-phosphatase E1, found in Aedes aegypti (Yellowfever mosquito).